We begin with the raw amino-acid sequence, 158 residues long: Interleukin-36 alpha (158 aa).

Residues 1 to 5 constitute a propeptide that is removed on maturation; it reads MEKAL. 3'-nitrotyrosine is present on tyrosine 96.

It belongs to the IL-1 family. In terms of assembly, interacts with TMED10; the interaction mediates the translocation from the cytoplasm into the ERGIC (endoplasmic reticulum-Golgi intermediate compartment) and thereby secretion. In terms of processing, N-terminal truncation leads to a dramatic enhancement of its activity (&gt;1000-fold). In terms of tissue distribution, expressed in immune system and fetal brain, but not in other tissues tested or in multiple hematopoietic cell lines. Predominantly expressed in skin keratinocytes but not in fibroblasts, endothelial cells or melanocytes. Increased in lesional psoriasis skin.

It localises to the cytoplasm. It is found in the secreted. Its function is as follows. Cytokine that binds to and signals through the IL1RL2/IL-36R receptor which in turn activates NF-kappa-B and MAPK signaling pathways in target cells linked to a pro-inflammatory response. Part of the IL-36 signaling system that is thought to be present in epithelial barriers and to take part in local inflammatory response; similar to the IL-1 system with which it shares the coreceptor IL1RAP. Seems to be involved in skin inflammatory response by acting on keratinocytes, dendritic cells and indirectly on T-cells to drive tissue infiltration, cell maturation and cell proliferation. In cultured keratinocytes induces the expression of macrophage, T-cell, and neutrophil chemokines, such as CCL3, CCL4, CCL5, CCL2, CCL17, CCL22, CL20, CCL5, CCL2, CCL17, CCL22, CXCL8, CCL20 and CXCL1, and the production of pro-inflammatory cytokines such as TNF-alpha, IL-8 and IL-6. In cultured monocytes up-regulates expression of IL-1A, IL-1B and IL-6. In myeloid dendritic cells involved in cell maturation by up-regulating surface expression of CD83, CD86 and HLA-DR. In monocyte-derived dendritic cells facilitates dendritic cell maturation and drives T-cell proliferation. May play a role in pro-inflammatory effects in the lung. The protein is Interleukin-36 alpha of Homo sapiens (Human).